The primary structure comprises 1302 residues: Phosphoribosylformylglycinamidine synthase (1302 aa).

Residues 307–318 (GASTGSGGEIRD) and Ala-678 each bind ATP. Mg(2+) contacts are provided by Glu-718, Asn-722, and Asp-891. The region spanning 1049–1302 (MAILREQGVN…MFQNARKNIG (254 aa)) is the Glutamine amidotransferase type-1 domain. Cys-1142 functions as the Nucleophile in the catalytic mechanism. Residues His-1267 and Glu-1269 contribute to the active site.

In the N-terminal section; belongs to the FGAMS family. In terms of assembly, monomer.

The protein resides in the cytoplasm. It carries out the reaction N(2)-formyl-N(1)-(5-phospho-beta-D-ribosyl)glycinamide + L-glutamine + ATP + H2O = 2-formamido-N(1)-(5-O-phospho-beta-D-ribosyl)acetamidine + L-glutamate + ADP + phosphate + H(+). Its pathway is purine metabolism; IMP biosynthesis via de novo pathway; 5-amino-1-(5-phospho-D-ribosyl)imidazole from N(2)-formyl-N(1)-(5-phospho-D-ribosyl)glycinamide: step 1/2. Phosphoribosylformylglycinamidine synthase involved in the purines biosynthetic pathway. Catalyzes the ATP-dependent conversion of formylglycinamide ribonucleotide (FGAR) and glutamine to yield formylglycinamidine ribonucleotide (FGAM) and glutamate. This is Phosphoribosylformylglycinamidine synthase from Vibrio parahaemolyticus serotype O3:K6 (strain RIMD 2210633).